The sequence spans 1720 residues: 6-methylcalicylic acide synthase (1720 aa).

A disordered region spans residues 1–31 (MDKQSASGEIPAMRWEPYHRRDPRNAKELSK). A Ketosynthase family 3 (KS3) domain is found at 1–399 (MDKQSASGEI…GTVSHAVIEQ (399 aa)). Basic and acidic residues predominate over residues 16-30 (EPYHRRDPRNAKELS). Residues C146, H281, and H321 each act as for beta-ketoacyl synthase activity in the active site. The tract at residues 509–823 (VWVFSGHGAQ…IAQLHCRGAE (315 aa)) is malonyl-CoA:ACP transacylase (MAT) domain. An N-terminal hotdog fold region spans residues 868 to 987 (HTLLGQRIGI…AYWARDIQEA (120 aa)). Residues 868-1139 (HTLLGQRIGI…FTAMRFSEIE (272 aa)) form a dehydratase (DH) domain region. One can recognise a PKS/mFAS DH domain in the interval 868–1144 (HTLLGQRIGI…FSEIEGTPGV (277 aa)). The active-site Proton acceptor; for dehydratase activity is the H900. The C-terminal hotdog fold stretch occupies residues 1001 to 1144 (GTRIRDDFSI…FSEIEGTPGV (144 aa)). Catalysis depends on D1065, which acts as the Proton donor; for dehydratase activity. Positions 1148-1545 (MESLVHQLAW…AVAVQWTSWR (398 aa)) are product template (PT) domain. The Carrier domain maps to 1644-1718 (VYLDEKIRGC…HLVGWFAEKV (75 aa)). S1678 is subject to O-(pantetheine 4'-phosphoryl)serine.

The protein localises to the cytoplasm. It localises to the cytosol. The enzyme catalyses 3 malonyl-CoA + acetyl-CoA + NADPH + 3 H(+) = 6-methylsalicylate + 3 CO2 + NADP(+) + 4 CoA + H2O. It functions in the pathway mycotoxin biosynthesis; patulin biosynthesis. In terms of biological role, 6-methylsalicylic acid synthase; part of the gene cluster that mediates the biosynthesis of patulin, an acetate-derived tetraketide mycotoxin produced by several fungal species that shows antimicrobial properties against several bacteria. PatK catalyzes the first step of the pathway which is the synthesis of 6-methylsalicylic acid via condensation of 1 acetate and 3 malonate units. The pathway begins with the synthesis of 6-methylsalicylic acid by the polyketide synthase (PKS) patK via condensation of acetate and malonate units. The 6-methylsalicylic acid decarboxylase patG then catalyzes the decarboxylation of 6-methylsalicylic acid to yield m-cresol (also known as 3-methylphenol). These first reactions occur in the cytosol. The intermediate m-cresol is then transported into the endoplasmic reticulum where the cytochrome P450 monooxygenase patH converts it to m-hydroxybenzyl alcohol, which is further converted to gentisyl alcohol by the cytochrome P450 monooxygenase patI. The oxidoreductases patJ and patO further convert gentisyl alcohol to isoepoxydon in the vacuole. PatN catalyzes then the transformation of isoepoxydon into phyllostine. The cluster protein patF is responsible for the conversion from phyllostine to neopatulin whereas the alcohol dehydrogenase patD converts neopatulin to E-ascladiol. The steps between isoepoxydon and E-ascladiol occur in the cytosol, and E-ascladiol is probably secreted to the extracellular space by one of the cluster-specific transporters patC or patM. Finally, the secreted patulin synthase patE catalyzes the conversion of E-ascladiol to patulin. The protein is 6-methylcalicylic acide synthase of Aspergillus clavatus (strain ATCC 1007 / CBS 513.65 / DSM 816 / NCTC 3887 / NRRL 1 / QM 1276 / 107).